The sequence spans 217 residues: Probable transaldolase (217 aa).

K83 functions as the Schiff-base intermediate with substrate in the catalytic mechanism.

Belongs to the transaldolase family. Type 3B subfamily.

The protein localises to the cytoplasm. The catalysed reaction is D-sedoheptulose 7-phosphate + D-glyceraldehyde 3-phosphate = D-erythrose 4-phosphate + beta-D-fructose 6-phosphate. It functions in the pathway carbohydrate degradation; pentose phosphate pathway; D-glyceraldehyde 3-phosphate and beta-D-fructose 6-phosphate from D-ribose 5-phosphate and D-xylulose 5-phosphate (non-oxidative stage): step 2/3. In terms of biological role, transaldolase is important for the balance of metabolites in the pentose-phosphate pathway. The sequence is that of Probable transaldolase from Chelativorans sp. (strain BNC1).